A 370-amino-acid polypeptide reads, in one-letter code: Mitogen-activated protein kinase 3 (370 aa).

The 288-residue stretch at 32-319 folds into the Protein kinase domain; sequence YVPIKPIGRG…VTEALEHPYM (288 aa). ATP is bound by residues 38-46 and K61; that span reads IGRGAYGIV. The active-site Proton acceptor is the D158. At T191 the chain carries Phosphothreonine. The TXY signature appears at 191-193; the sequence is TEY. Residue Y193 is modified to Phosphotyrosine.

This sequence belongs to the protein kinase superfamily. CMGC Ser/Thr protein kinase family. MAP kinase subfamily. Dually phosphorylated on Thr-191 and Tyr-193, which activates the enzyme.

It carries out the reaction L-seryl-[protein] + ATP = O-phospho-L-seryl-[protein] + ADP + H(+). It catalyses the reaction L-threonyl-[protein] + ATP = O-phospho-L-threonyl-[protein] + ADP + H(+). Its activity is regulated as follows. Activated by threonine and tyrosine phosphorylation. The polypeptide is Mitogen-activated protein kinase 3 (MPK3) (Oryza sativa subsp. japonica (Rice)).